A 185-amino-acid polypeptide reads, in one-letter code: Capsid protein (185 aa).

The tract at residues Asn136 to Cys185 is disordered. Over residues Val149–Ser178 the composition is skewed to basic residues. A phosphoserine; by host mark is found at Ser157, Ser164, and Ser172. One copy of the 1; half-length repeat lies at Ser157–Pro163. Positions Ser157–Gln179 are 3 X 8 AA repeats of S-P-R-R-R-[PR]-S-Q. Residues Arg160 to Arg177 carry the Bipartite nuclear localization signal motif. 2 consecutive repeat copies span residues Ser164 to Gln171 and Ser172 to Gln179. The segment at Gln179 to Cys185 is RNA binding.

This sequence belongs to the orthohepadnavirus core antigen family. Homodimerizes, then multimerizes. Interacts with cytosol exposed regions of viral L glycoprotein present in the reticulum-to-Golgi compartment. Interacts with human FLNB. Phosphorylated form interacts with host importin alpha; this interaction depends on the exposure of the NLS, which itself depends upon genome maturation and/or phosphorylation of the capsid protein. Interacts with host NUP153. In terms of processing, phosphorylated by host SRPK1, SRPK2, and maybe protein kinase C or GAPDH. Phosphorylation is critical for pregenomic RNA packaging. Protein kinase C phosphorylation is stimulated by HBx protein and may play a role in transport of the viral genome to the nucleus at the late step during the viral replication cycle.

It is found in the virion. The protein localises to the host cytoplasm. In terms of biological role, self assembles to form an icosahedral capsid. Most capsids appear to be large particles with an icosahedral symmetry of T=4 and consist of 240 copies of capsid protein, though a fraction forms smaller T=3 particles consisting of 180 capsid proteins. Entering capsids are transported along microtubules to the nucleus. Phosphorylation of the capsid is thought to induce exposure of nuclear localization signal in the C-terminal portion of the capsid protein that allows binding to the nuclear pore complex via the importin (karyopherin-) alpha and beta. Capsids are imported in intact form through the nuclear pore into the nuclear basket, where it probably binds NUP153. Only capsids that contain the mature viral genome can release the viral DNA and capsid protein into the nucleoplasm. Immature capsids get stuck in the basket. Capsids encapsulate the pre-genomic RNA and the P protein. Pre-genomic RNA is reverse-transcribed into DNA while the capsid is still in the cytoplasm. The capsid can then either be directed to the nucleus, providing more genomes for transcription, or bud through the endoplasmic reticulum to provide new virions. In Homo sapiens (Human), this protein is Capsid protein.